We begin with the raw amino-acid sequence, 115 residues long: MFSRVLVAALVALPVLVSASPTPGGYPDSTTVVSQCNVGELHCCNTQQTPDHTNAAGGLLGAAANVGALLGFDCTPISVIGIGGNNCAAQPVCCEANEFTGLINALSCSPINVNL.

A signal peptide spans 1–19 (MFSRVLVAALVALPVLVSA). 4 disulfide bridges follow: C36/C93, C43/C87, C44/C74, and C94/C108.

It belongs to the fungal hydrophobin family. Self-assembles to form functional amyloid fibrils called rodlets. Self-assembly into fibrillar rodlets occurs spontaneously at hydrophobic:hydrophilic interfaces and the rodlets further associate laterally to form amphipathic monolayers.

It is found in the secreted. Its subcellular location is the cell wall. Functionally, aerial growth, conidiation, and dispersal of filamentous fungi in the environment rely upon a capability of their secreting small amphipathic proteins called hydrophobins (HPBs) with low sequence identity. Class I can self-assemble into an outermost layer of rodlet bundles on aerial cell surfaces, conferring cellular hydrophobicity that supports fungal growth, development and dispersal; whereas Class II form highly ordered films at water-air interfaces through intermolecular interactions but contribute nothing to the rodlet structure. The protein is Class I hydrophobin C of Agaricus bisporus (White button mushroom).